The following is a 74-amino-acid chain: Putative membrane protein insertion efficiency factor (74 aa).

The protein belongs to the UPF0161 family.

The protein localises to the cell membrane. Could be involved in insertion of integral membrane proteins into the membrane. This is Putative membrane protein insertion efficiency factor from Bacillus pumilus (strain SAFR-032).